A 501-amino-acid polypeptide reads, in one-letter code: Proline--tRNA ligase (501 aa).

It belongs to the class-II aminoacyl-tRNA synthetase family. ProS type 3 subfamily. As to quaternary structure, homodimer.

Its subcellular location is the cytoplasm. It carries out the reaction tRNA(Pro) + L-proline + ATP = L-prolyl-tRNA(Pro) + AMP + diphosphate. Its function is as follows. Catalyzes the attachment of proline to tRNA(Pro) in a two-step reaction: proline is first activated by ATP to form Pro-AMP and then transferred to the acceptor end of tRNA(Pro). The protein is Proline--tRNA ligase of Halobacterium salinarum (strain ATCC 29341 / DSM 671 / R1).